Here is a 294-residue protein sequence, read N- to C-terminus: Glycine--tRNA ligase alpha subunit (294 aa).

The protein belongs to the class-II aminoacyl-tRNA synthetase family. In terms of assembly, tetramer of two alpha and two beta subunits.

The protein resides in the cytoplasm. It carries out the reaction tRNA(Gly) + glycine + ATP = glycyl-tRNA(Gly) + AMP + diphosphate. In Trichormus variabilis (strain ATCC 29413 / PCC 7937) (Anabaena variabilis), this protein is Glycine--tRNA ligase alpha subunit.